A 187-amino-acid polypeptide reads, in one-letter code: uncharacterized protein (187 aa).

It belongs to the isochorismatase family.

This is an uncharacterized protein from Bacillus subtilis (strain 168).